Consider the following 1253-residue polypeptide: Methionine synthase (1253 aa).

Positions 6–326 (QDEIEAILRK…DHIREIAEAV (321 aa)) constitute a Hcy-binding domain. Cys248, Cys311, and Cys312 together coordinate Zn(2+). A Pterin-binding domain is found at 359 to 620 (FVNIGERCNV…IHKDLLQLCE (262 aa)). (6S)-5,6,7,8-tetrahydrofolate contacts are provided by residues 370–372 (GSK), Asp437, Asn458, Asp525, Asn567, Arg573, and Arg579. The region spanning 650 to 747 (QTDEWRNGSI…FMEKEREEAR (98 aa)) is the B12-binding N-terminal domain. Methylcob(III)alamin contacts are provided by residues Glu697, 770–774 (GDVHD), His773, Ser818, Thr822, and Ala874. The B12-binding domain occupies 760-895 (QGTIVLATVK…DENLKDDYFE (136 aa)). The region spanning 911 to 1253 (SLKERKYLPL…LGPILGYDTD (343 aa)) is the AdoMet activation domain. Residues Asp962, Arg1160, and 1215-1216 (YF) contribute to the S-adenosyl-L-methionine site. At Thr1252 the chain carries Phosphothreonine.

Belongs to the vitamin-B12 dependent methionine synthase family. In terms of assembly, monomer. Dimer. Forms a multiprotein complex with MMACHC, MMADHC and MTRR. It depends on methylcob(III)alamin as a cofactor. Zn(2+) serves as cofactor.

It is found in the cytoplasm. It carries out the reaction (6S)-5-methyl-5,6,7,8-tetrahydrofolate + L-homocysteine = (6S)-5,6,7,8-tetrahydrofolate + L-methionine. The protein operates within amino-acid biosynthesis; L-methionine biosynthesis via de novo pathway; L-methionine from L-homocysteine (MetH route): step 1/1. Catalyzes the transfer of a methyl group from methylcob(III)alamin (MeCbl) to homocysteine, yielding enzyme-bound cob(I)alamin and methionine in the cytosol. MeCbl is an active form of cobalamin (vitamin B12) used as a cofactor for methionine biosynthesis. Cob(I)alamin form is regenerated to MeCbl by a transfer of a methyl group from 5-methyltetrahydrofolate. The processing of cobalamin in the cytosol occurs in a multiprotein complex composed of at least MMACHC, MMADHC, MTRR (methionine synthase reductase) and MTR which may contribute to shuttle safely and efficiently cobalamin towards MTR in order to produce methionine. The polypeptide is Methionine synthase (Mtr) (Rattus norvegicus (Rat)).